The primary structure comprises 88 residues: Small ribosomal subunit protein uS17 (88 aa).

It belongs to the universal ribosomal protein uS17 family. In terms of assembly, part of the 30S ribosomal subunit.

Its function is as follows. One of the primary rRNA binding proteins, it binds specifically to the 5'-end of 16S ribosomal RNA. This is Small ribosomal subunit protein uS17 from Pseudomonas fluorescens (strain ATCC BAA-477 / NRRL B-23932 / Pf-5).